Reading from the N-terminus, the 238-residue chain is Leucine-rich repeat-containing protein 57 (238 aa).

LRR repeat units lie at residues 39–60, 62–84, 85–106, 108–129, 131–152, 153–175, 176–196, and 201–221; these read NLRTIDLSSNKIEVVPPMMGKF, LLKSLSLNNNRISRLPDELCKLK, KLETLHLNGNQISQLPADFVQL, ALKTLNLSGNRLKTLPAQLFKL, NLDVVDLSKNRIQAIPDEVSGL, QAIELNLNQNQISQISVNISHCP, RLKVLRLEENCLELSMLPPSI, and QISLLAVEGNLFEIKKLRDLE.

In Xenopus laevis (African clawed frog), this protein is Leucine-rich repeat-containing protein 57 (lrrc57).